Reading from the N-terminus, the 884-residue chain is Kinesin-like protein KIN-7C (884 aa).

Positions 33–355 (RIQVLVRLRP…LLFGSCAKEV (323 aa)) constitute a Kinesin motor domain. Residue 119 to 126 (GQTSSGKT) coordinates ATP. Residues 364-435 (VMSDKALVKH…LQDLLQSVGD (72 aa)) are a coiled coil. Residues 434–530 (GDHDLNRQVQ…VNSRHSRPSG (97 aa)) are disordered. Residues 449–460 (RSPPSVGMPPSV) are compositionally biased toward low complexity. Residues 461–483 (SRDDSSQVSHDDSDLYKEVRCIE) are compositionally biased toward basic and acidic residues. A compositionally biased stretch (polar residues) spans 498–523 (GESSSPQDSNMNSGLHGNDSNASVNS).

This sequence belongs to the TRAFAC class myosin-kinesin ATPase superfamily. Kinesin family. KIN-7 subfamily.

This is Kinesin-like protein KIN-7C from Oryza sativa subsp. japonica (Rice).